A 338-amino-acid chain; its full sequence is UDP-glucose 4-epimerase (338 aa).

NAD(+)-binding positions include 11–12 (YI), 31–36 (DNLCNS), 58–59 (DI), 80–84 (FAGLK), N99, S124, Y149, K153, and F178. 2 residues coordinate substrate: S124 and Y149. Y149 acts as the Proton acceptor in catalysis. Substrate-binding positions include N179, 199-200 (NL), 216-218 (AIF), R231, 292-295 (REGD), and Y299.

Belongs to the NAD(P)-dependent epimerase/dehydratase family. Homodimer. NAD(+) serves as cofactor.

The catalysed reaction is UDP-alpha-D-glucose = UDP-alpha-D-galactose. It functions in the pathway carbohydrate metabolism; galactose metabolism. Inhibited by UDP-phenol and NaBH3CN. In terms of biological role, involved in the metabolism of galactose. Catalyzes the conversion of UDP-galactose (UDP-Gal) to UDP-glucose (UDP-Glc) through a mechanism involving the transient reduction of NAD. It is only active on UDP-galactose and UDP-glucose. This chain is UDP-glucose 4-epimerase (galE), found in Escherichia coli (strain K12).